The chain runs to 452 residues: Probable carboxypeptidase ACLA_088580 (452 aa).

Positions 1–18 are cleaved as a signal peptide; sequence MRSLTLLLSLSTALRSVA. N107 and N156 each carry an N-linked (GlcNAc...) asparagine glycan. D175 lines the Zn(2+) pocket. Residue E207 is the Proton acceptor of the active site. A Zn(2+)-binding site is contributed by E208.

It belongs to the peptidase M20A family. Requires Zn(2+) as cofactor.

It localises to the secreted. This Aspergillus clavatus (strain ATCC 1007 / CBS 513.65 / DSM 816 / NCTC 3887 / NRRL 1 / QM 1276 / 107) protein is Probable carboxypeptidase ACLA_088580.